A 414-amino-acid polypeptide reads, in one-letter code: Snake venom metalloproteinase atrolysin-D (414 aa).

Residues 1 to 20 (MIEVLLVTICLAVFPYQGSS) form the signal peptide. The propeptide occupies 21–190 (IILESGNVND…KASDLNLNPD (170 aa)). A Pyrrolidone carboxylic acid modification is found at Gln191. The Peptidase M12B domain maps to 197-393 (RYIELVVVAD…YKPQCILNKP (197 aa)). Glu200 and Asp284 together coordinate Ca(2+). Disulfide bonds link Cys308/Cys388 and Cys348/Cys355. His333 provides a ligand contact to Zn(2+). Glu334 is an active-site residue. Positions 337 and 343 each coordinate Zn(2+). Cys388 and Asn391 together coordinate Ca(2+). A propeptide spanning residues 394-414 (LRIDPVSTPVSGNELLEAGEE) is cleaved from the precursor.

Belongs to the venom metalloproteinase (M12B) family. P-I subfamily. As to quaternary structure, monomer. Zn(2+) is required as a cofactor. Post-translationally, the N-terminus is blocked. As to expression, expressed by the venom gland.

It localises to the secreted. It carries out the reaction Cleavage of 5-His-|-Leu-6, 10-His-|-Leu-11, 14-Ala-|-Leu-15, 16-Tyr-|-Leu-17 and 23-Gly-|-Phe-24 of insulin B chain. With small molecule substrates prefers hydrophobic residue at P2' and small residue such as Ala, Gly at P1.. Its function is as follows. Snake venom zinc metalloproteinase that causes hemorrhage by provoking the degradation of the sub-endothelial matrix proteins (fibronectin, laminin, type IV collagen, nidogen, and gelatins). In Crotalus atrox (Western diamondback rattlesnake), this protein is Snake venom metalloproteinase atrolysin-D.